The chain runs to 591 residues: V-type ATP synthase alpha chain (591 aa).

Position 233-240 (233-240) interacts with ATP; sequence GPFGAGKT.

The protein belongs to the ATPase alpha/beta chains family.

The catalysed reaction is ATP + H2O + 4 H(+)(in) = ADP + phosphate + 5 H(+)(out). Functionally, produces ATP from ADP in the presence of a proton gradient across the membrane. The V-type alpha chain is a catalytic subunit. The protein is V-type ATP synthase alpha chain of Streptococcus pyogenes serotype M49 (strain NZ131).